Consider the following 38-residue polypeptide: Photosystem II reaction center protein M (38 aa).

A helical membrane pass occupies residues 7 to 27 (GFVASILFVLVPTVFLLILYI).

The protein belongs to the PsbM family. In terms of assembly, PSII is composed of 1 copy each of membrane proteins PsbA, PsbB, PsbC, PsbD, PsbE, PsbF, PsbH, PsbI, PsbJ, PsbK, PsbL, PsbM, PsbT, PsbX, PsbY, PsbZ, Psb30/Ycf12, peripheral proteins PsbO, CyanoQ (PsbQ), PsbU, PsbV and a large number of cofactors. It forms dimeric complexes.

It is found in the cellular thylakoid membrane. In terms of biological role, one of the components of the core complex of photosystem II (PSII). PSII is a light-driven water:plastoquinone oxidoreductase that uses light energy to abstract electrons from H(2)O, generating O(2) and a proton gradient subsequently used for ATP formation. It consists of a core antenna complex that captures photons, and an electron transfer chain that converts photonic excitation into a charge separation. This subunit is found at the monomer-monomer interface. This chain is Photosystem II reaction center protein M, found in Nostoc punctiforme (strain ATCC 29133 / PCC 73102).